Reading from the N-terminus, the 343-residue chain is tRNA N6-adenosine threonylcarbamoyltransferase (343 aa).

Fe cation-binding residues include His-114 and His-118. Residues 137–141 (LVSGG), Asp-171, Gly-184, Asp-188, and Asn-278 contribute to the substrate site. Position 306 (Asp-306) interacts with Fe cation.

This sequence belongs to the KAE1 / TsaD family. Fe(2+) is required as a cofactor.

The protein resides in the cytoplasm. It catalyses the reaction L-threonylcarbamoyladenylate + adenosine(37) in tRNA = N(6)-L-threonylcarbamoyladenosine(37) in tRNA + AMP + H(+). Functionally, required for the formation of a threonylcarbamoyl group on adenosine at position 37 (t(6)A37) in tRNAs that read codons beginning with adenine. Is involved in the transfer of the threonylcarbamoyl moiety of threonylcarbamoyl-AMP (TC-AMP) to the N6 group of A37, together with TsaE and TsaB. TsaD likely plays a direct catalytic role in this reaction. This Acidothermus cellulolyticus (strain ATCC 43068 / DSM 8971 / 11B) protein is tRNA N6-adenosine threonylcarbamoyltransferase.